A 534-amino-acid chain; its full sequence is Calcium uptake protein 1 homolog, mitochondrial (534 aa).

Residues 1–32 constitute a mitochondrion transit peptide; sequence MLHCSFLRVIPIKNASKRLIIVRSLTSAPAKT. A disordered region spans residues 131–150; it reads PEASQKEEVTESNGEVEEVK. EF-hand domains are found at residues 271 to 306, 338 to 359, and 466 to 501; these read TSHADFALAFKIFDVDGNGALDKEEFTKVQQLIMSQ, KDGKGSLSSEKFIEFQERLQHD, and LSDHVVDVVITLFDDNLDGKLSHEEMVAVMRRRMRR. Residues Asp284, Asp286, Asn288, and Glu295 each contribute to the Ca(2+) site.

The protein belongs to the MICU1 family. MICU1 subfamily. In terms of tissue distribution, expressed at low levels in PLM touch receptor neurons, germ cells, epidermis, and muscles.

The protein localises to the mitochondrion intermembrane space. It localises to the mitochondrion inner membrane. Functionally, calcium sensor of the mitochondrial calcium uniporter (mcu-1) channel, which senses calcium level via its EF-hand domains. At low calcium levels, micu-1 occludes the pore of the mcu-1 channel, preventing mitochondrial calcium uptake. At higher calcium levels, calcium-binding to micu-1 induces a conformational change that weakens mcu-1-micu-1 interactions and moves micu-1 away from the pore, allowing calcium permeation through the mcu-1 channel. Also required to protect against manganese toxicity by preventing manganese uptake by mcu-1. Modulates the activity of the mitochondrial calcium uniporter protein mcu-1 depending on the level of intracellular calcium in PLM touch receptor neurons following axonal injury. The sequence is that of Calcium uptake protein 1 homolog, mitochondrial from Caenorhabditis elegans.